The chain runs to 310 residues: Putative S-adenosyl-L-methionine-dependent methyltransferase Mb0151 (310 aa).

S-adenosyl-L-methionine is bound by residues D132 and 161 to 162 (DL).

It belongs to the UPF0677 family.

In terms of biological role, exhibits S-adenosyl-L-methionine-dependent methyltransferase activity. This is Putative S-adenosyl-L-methionine-dependent methyltransferase Mb0151 from Mycobacterium bovis (strain ATCC BAA-935 / AF2122/97).